The primary structure comprises 116 residues: Probable early E4 11 kDa protein (116 aa).

This chain is Probable early E4 11 kDa protein, found in Human adenovirus A serotype 12 (HAdV-12).